Here is a 289-residue protein sequence, read N- to C-terminus: Ribosomal RNA small subunit methyltransferase A (289 aa).

Residues asparagine 33, valine 35, glycine 60, glutamate 81, aspartate 111, and asparagine 130 each contribute to the S-adenosyl-L-methionine site.

This sequence belongs to the class I-like SAM-binding methyltransferase superfamily. rRNA adenine N(6)-methyltransferase family. RsmA subfamily.

It localises to the cytoplasm. The catalysed reaction is adenosine(1518)/adenosine(1519) in 16S rRNA + 4 S-adenosyl-L-methionine = N(6)-dimethyladenosine(1518)/N(6)-dimethyladenosine(1519) in 16S rRNA + 4 S-adenosyl-L-homocysteine + 4 H(+). Functionally, specifically dimethylates two adjacent adenosines (A1518 and A1519) in the loop of a conserved hairpin near the 3'-end of 16S rRNA in the 30S particle. May play a critical role in biogenesis of 30S subunits. In Corynebacterium efficiens (strain DSM 44549 / YS-314 / AJ 12310 / JCM 11189 / NBRC 100395), this protein is Ribosomal RNA small subunit methyltransferase A.